Here is a 470-residue protein sequence, read N- to C-terminus: Uronate isomerase (470 aa).

It belongs to the metallo-dependent hydrolases superfamily. Uronate isomerase family.

The enzyme catalyses D-glucuronate = D-fructuronate. It catalyses the reaction aldehydo-D-galacturonate = keto-D-tagaturonate. It functions in the pathway carbohydrate metabolism; pentose and glucuronate interconversion. The sequence is that of Uronate isomerase from Salmonella heidelberg (strain SL476).